The following is a 240-amino-acid chain: EF-hand domain-containing protein D2 (240 aa).

Residues 1–51 (MATDELASKLSRRLQMEGEGGEATEQPGLNGAAAAAAAEAPDETAQALGSA) form a disordered region. Alanine 2 bears the N-acetylalanine mark. Serine 11 bears the Phosphoserine mark. Residues 32 to 47 (AAAAAAAEAPDETAQA) show a composition bias toward low complexity. Serine 74 and serine 76 each carry phosphoserine. Tyrosine 83 bears the Phosphotyrosine mark. EF-hand domains are found at residues 92 to 127 (KQIKDMEKMFKQYDAGRDGFIDLMELKLMMEKLGAP) and 128 to 163 (QTHLGLKSMIQEVDEDFDSKLSFREFLLIFRKAAAG). Ca(2+)-binding residues include aspartate 105, aspartate 109, glutamate 116, aspartate 141, aspartate 143, aspartate 145, lysine 147, and glutamate 152. Lysine 233 is modified (N6-acetyllysine).

As to quaternary structure, interacts with CASP9; with inactive form. In terms of tissue distribution, detected in thymus, kidney, spleen, lung, liver and brain. Highest abundance in brain and lowest in kidney and thymus.

The protein localises to the membrane raft. Functionally, may regulate B-cell receptor (BCR)-induced immature and primary B-cell apoptosis. Plays a role as negative regulator of the canonical NF-kappa-B-activating branch. Controls spontaneous apoptosis through the regulation of BCL2L1 abundance. This Mus musculus (Mouse) protein is EF-hand domain-containing protein D2 (Efhd2).